Here is a 233-residue protein sequence, read N- to C-terminus: Small ribosomal subunit protein uS3 (233 aa).

Residues 39–107 enclose the KH type-2 domain; the sequence is VRQFLTKELS…PAQINTYEIR (69 aa).

This sequence belongs to the universal ribosomal protein uS3 family. In terms of assembly, part of the 30S ribosomal subunit. Forms a tight complex with proteins S10 and S14.

In terms of biological role, binds the lower part of the 30S subunit head. Binds mRNA in the 70S ribosome, positioning it for translation. In Hamiltonella defensa subsp. Acyrthosiphon pisum (strain 5AT), this protein is Small ribosomal subunit protein uS3.